Consider the following 193-residue polypeptide: MTRPSDGGRIEVICGCMYSGKTEELIRRMRQVRIARQSYRIFTPRMDTRYAEGQVASHSGSRLEAITVATMKDILAHAEDAQVVAIDELHLFDDDPAEMVRGCQWLANRGVRVIVAGLDLNYRAEPFPAMMHLLALAEQVDKLYAICVKCGAYATRSQRLIDGKPAPADAPTIVVGGLDMYEARCRTCYEPAV.

ATP is bound by residues 15–22 (GCMYSGKT) and 87–90 (DELH). The active-site Proton acceptor is the Glu-88. Residues Cys-147, Cys-150, Cys-185, and Cys-188 each contribute to the Zn(2+) site.

Belongs to the thymidine kinase family. As to quaternary structure, homotetramer.

It localises to the cytoplasm. It catalyses the reaction thymidine + ATP = dTMP + ADP + H(+). The chain is Thymidine kinase from Chloroflexus aurantiacus (strain ATCC 29366 / DSM 635 / J-10-fl).